The sequence spans 229 residues: NAD(P)H-hydrate epimerase (229 aa).

A YjeF N-terminal domain is found at 11-222; it reads YAAADIRAAE…DVGLDLSGAT (212 aa). A (6S)-NADPHX-binding site is contributed by 59–63; that stretch reads NNGGD. K(+) contacts are provided by asparagine 60 and aspartate 124. Residues 128–136 and aspartate 164 each bind (6S)-NADPHX; that span reads GIGTTASPA. Serine 167 lines the K(+) pocket.

The protein belongs to the NnrE/AIBP family. K(+) serves as cofactor.

The catalysed reaction is (6R)-NADHX = (6S)-NADHX. It catalyses the reaction (6R)-NADPHX = (6S)-NADPHX. Its function is as follows. Catalyzes the epimerization of the S- and R-forms of NAD(P)HX, a damaged form of NAD(P)H that is a result of enzymatic or heat-dependent hydration. This is a prerequisite for the S-specific NAD(P)H-hydrate dehydratase to allow the repair of both epimers of NAD(P)HX. This chain is NAD(P)H-hydrate epimerase, found in Clavibacter sepedonicus (Clavibacter michiganensis subsp. sepedonicus).